The sequence spans 300 residues: UPF0761 membrane protein PSHAa0171 (300 aa).

6 helical membrane passes run 47–67, 100–120, 143–163, 181–201, 215–235, and 249–269; these read LLSL…FPGF, NANQ…LLLI, FAVY…SIAV, FSGF…FIML, AIPG…GFAL, and AVAT…VVLL.

This sequence belongs to the UPF0761 family.

It localises to the cell inner membrane. The sequence is that of UPF0761 membrane protein PSHAa0171 from Pseudoalteromonas translucida (strain TAC 125).